The primary structure comprises 144 residues: Large ribosomal subunit protein uL15 (144 aa).

Positions 1–52 are disordered; that stretch reads MIKLESLQDPSPRKRRKKLLGRGPGSGHGKTSGRGHKGDGSRSGYKRRFGYE. A compositionally biased stretch (gly residues) spans 22–32; that stretch reads RGPGSGHGKTS.

The protein belongs to the universal ribosomal protein uL15 family. Part of the 50S ribosomal subunit.

Its function is as follows. Binds to the 23S rRNA. The protein is Large ribosomal subunit protein uL15 of Chlamydia felis (strain Fe/C-56) (Chlamydophila felis).